The chain runs to 262 residues: Type III pantothenate kinase (262 aa).

An ATP-binding site is contributed by 9–16 (DSGNTRVK). Residues Tyr-93 and 100–103 (GSDR) contribute to the substrate site. Asp-102 functions as the Proton acceptor in the catalytic mechanism. Residue Asp-122 coordinates K(+). An ATP-binding site is contributed by Thr-125. Thr-175 provides a ligand contact to substrate.

Belongs to the type III pantothenate kinase family. As to quaternary structure, homodimer. Requires NH4(+) as cofactor. It depends on K(+) as a cofactor.

Its subcellular location is the cytoplasm. It catalyses the reaction (R)-pantothenate + ATP = (R)-4'-phosphopantothenate + ADP + H(+). It functions in the pathway cofactor biosynthesis; coenzyme A biosynthesis; CoA from (R)-pantothenate: step 1/5. In terms of biological role, catalyzes the phosphorylation of pantothenate (Pan), the first step in CoA biosynthesis. This is Type III pantothenate kinase from Nitrosospira multiformis (strain ATCC 25196 / NCIMB 11849 / C 71).